The chain runs to 891 residues: Alanine--tRNA ligase (891 aa).

The Zn(2+) site is built by His569, His573, Cys671, and His675.

The protein belongs to the class-II aminoacyl-tRNA synthetase family. In terms of assembly, homotetramer. The cofactor is Zn(2+).

It localises to the cytoplasm. The catalysed reaction is tRNA(Ala) + L-alanine + ATP = L-alanyl-tRNA(Ala) + AMP + diphosphate. In terms of biological role, catalyzes the attachment of alanine to tRNA(Ala) in a two-step reaction: alanine is first activated by ATP to form Ala-AMP and then transferred to the acceptor end of tRNA(Ala). Also edits incorrectly charged Ser-tRNA(Ala) and Gly-tRNA(Ala) via its editing domain. The chain is Alanine--tRNA ligase from Blochmanniella floridana.